A 110-amino-acid polypeptide reads, in one-letter code: Large ribosomal subunit protein uL22 (110 aa).

The protein belongs to the universal ribosomal protein uL22 family. As to quaternary structure, part of the 50S ribosomal subunit.

Its function is as follows. This protein binds specifically to 23S rRNA; its binding is stimulated by other ribosomal proteins, e.g. L4, L17, and L20. It is important during the early stages of 50S assembly. It makes multiple contacts with different domains of the 23S rRNA in the assembled 50S subunit and ribosome. In terms of biological role, the globular domain of the protein is located near the polypeptide exit tunnel on the outside of the subunit, while an extended beta-hairpin is found that lines the wall of the exit tunnel in the center of the 70S ribosome. The protein is Large ribosomal subunit protein uL22 of Paracidovorax citrulli (strain AAC00-1) (Acidovorax citrulli).